A 686-amino-acid polypeptide reads, in one-letter code: U-box domain-containing protein 19 (686 aa).

A U-box domain is found at 277–351 (LNVDDLRCPI…QSYSKQNGVV (75 aa)). 5 ARM repeats span residues 406-445 (TFYR…NLSK), 448-489 (AGKT…YLSS), 491-533 (GDYS…SLLM), 536-577 (PDNH…KMAE), and 579-620 (PDGM…NLCH).

The catalysed reaction is S-ubiquitinyl-[E2 ubiquitin-conjugating enzyme]-L-cysteine + [acceptor protein]-L-lysine = [E2 ubiquitin-conjugating enzyme]-L-cysteine + N(6)-ubiquitinyl-[acceptor protein]-L-lysine.. Its pathway is protein modification; protein ubiquitination. Functionally, functions as an E3 ubiquitin ligase. The sequence is that of U-box domain-containing protein 19 (PUB19) from Arabidopsis thaliana (Mouse-ear cress).